The sequence spans 203 residues: Twist-related protein 1 (203 aa).

The segment covering methionine 1–serine 18 has biased composition (low complexity). The tract at residues methionine 1–glutamate 106 is disordered. Residues arginine 34–serine 43 show a composition bias toward basic residues. 2 stretches are compositionally biased toward gly residues: residues alanine 47–glutamate 66 and glycine 81–serine 100. A bHLH domain is found at threonine 109 to leucine 160. Positions glutamine 162–arginine 192 are sufficient for transactivation activity.

As to quaternary structure, efficient DNA binding requires dimerization with another bHLH protein. Homodimer or heterodimer with E proteins such as TCF3. ID1 binds preferentially to TCF3 but does not interact efficiently with TWIST1 so ID1 levels control the amount of TCF3 available to dimerize with TWIST and thus determine the type of dimer formed.

It localises to the nucleus. Acts as a transcriptional regulator. Inhibits myogenesis by sequestrating E proteins, inhibiting trans-activation by MEF2, and inhibiting DNA-binding by MYOD1 through physical interaction. This interaction probably involves the basic domains of both proteins. Also represses expression of pro-inflammatory cytokines such as TNFA and IL1B. Regulates cranial suture patterning and fusion. Activates transcription as a heterodimer with E proteins. Regulates gene expression differentially, depending on dimer composition. Homodimers induce expression of FGFR2 and POSTN while heterodimers repress FGFR2 and POSTN expression and induce THBS1 expression. Heterodimerization is also required for osteoblast differentiation. Represses the activity of the circadian transcriptional activator: NPAS2-BMAL1 heterodimer. This is Twist-related protein 1 (TWIST1) from Pongo pygmaeus (Bornean orangutan).